Reading from the N-terminus, the 1435-residue chain is Gag-Pol polyprotein (1435 aa).

Gly-2 carries N-myristoyl glycine; by host lipidation. The interval Val-7 to Leu-31 is interaction with Gp41. The segment at Leu-8–Arg-43 is interaction with host CALM1. The interaction with host AP3D1 stretch occupies residues Lys-12 to Ile-19. Positions Asp-14 to His-33 are interaction with membrane phosphatidylinositol 4,5-bisphosphate and RNA. The short motif at Trp-16 to Lys-22 is the Nuclear export signal element. The short motif at Lys-26 to Lys-32 is the Nuclear localization signal element. Residues Asp-73–Ser-77 form an interaction with membrane phosphatidylinositol 4,5-bisphosphate region. Tyr-130 carries the phosphotyrosine; by host modification. An interaction with human PPIA/CYPA and NUP153 region spans residues Asn-187 to Gln-225. Residues Arg-212–Ser-232 are disordered. A dimerization/Multimerization of capsid protein p24 region spans residues Tyr-276 to Leu-362. 2 consecutive CCHC-type zinc fingers follow at residues Ile-394–Ala-411 and Lys-415–Asn-432. The segment at Thr-455–Glu-480 is disordered. The segment covering Asp-463–Glu-472 has biased composition (gly residues). The dimerization of protease stretch occupies residues Pro-488–Leu-492. The Peptidase A2 domain maps to Cys-507–Ile-576. The For protease activity; shared with dimeric partner role is filled by Asp-512. Dimerization of protease regions lie at residues Gly-536–Lys-542 and Asn-575–Pro-587. Positions Glu-630 to Leu-820 constitute a Reverse transcriptase domain. 3 residues coordinate Mg(2+): Asp-696, Asp-771, and Asp-772. Residues Phe-813–His-821 form an RT 'primer grip' region. A Tryptophan repeat motif motif is present at residues Trp-984 to Trp-1000. In terms of domain architecture, RNase H type-1 spans Ile-1020–Arg-1143. 4 residues coordinate Mg(2+): Asp-1029, Glu-1064, Asp-1084, and Asp-1135. Residues Glu-1149 to His-1190 form an Integrase-type zinc finger. Residues His-1158, His-1162, Cys-1186, and Cys-1189 each coordinate Zn(2+). An Integrase catalytic domain is found at Val-1200–Leu-1350. Positions 1210, 1262, and 1298 each coordinate Mg(2+). The segment at residues Phe-1369–Glu-1416 is a DNA-binding region (integrase-type).

In terms of assembly, homotrimer; further assembles as hexamers of trimers. Interacts with gp41 (via C-terminus). Interacts with host CALM1; this interaction induces a conformational change in the Matrix protein, triggering exposure of the myristate group. Interacts with host AP3D1; this interaction allows the polyprotein trafficking to multivesicular bodies during virus assembly. Part of the pre-integration complex (PIC) which is composed of viral genome, matrix protein, Vpr and integrase. As to quaternary structure, homodimer; the homodimer further multimerizes as homohexamers or homopentamers. Interacts with human PPIA/CYPA; This interaction stabilizes the capsid. Interacts with human NUP153. Interacts with host PDZD8; this interaction stabilizes the capsid. Interacts with monkey TRIM5; this interaction destabilizes the capsid. Homodimer, whose active site consists of two apposed aspartic acid residues. In terms of assembly, heterodimer of p66 RT and p51 RT (RT p66/p51). Heterodimerization of RT is essential for DNA polymerase activity. The overall folding of the subdomains is similar in p66 RT and p51 RT but the spatial arrangements of the subdomains are dramatically different. As to quaternary structure, homotetramer; may further associate as a homohexadecamer. Part of the pre-integration complex (PIC) which is composed of viral genome, matrix protein, Vpr and integrase. Interacts with human SMARCB1/INI1 and human PSIP1/LEDGF isoform 1. Interacts with human KPNA3; this interaction might play a role in nuclear import of the pre-integration complex. Interacts with human NUP153; this interaction might play a role in nuclear import of the pre-integration complex. Mg(2+) serves as cofactor. In terms of processing, specific enzymatic cleavages by the viral protease yield mature proteins. The protease is released by autocatalytic cleavage. The polyprotein is cleaved during and after budding, this process is termed maturation. Proteolytic cleavage of p66 RT removes the RNase H domain to yield the p51 RT subunit. Nucleocapsid protein p7 might be further cleaved after virus entry. Post-translationally, tyrosine phosphorylated presumably in the virion by a host kinase. Phosphorylation is apparently not a major regulator of membrane association. Phosphorylated possibly by host MAPK1; this phosphorylation is necessary for Pin1-mediated virion uncoating. In terms of processing, methylated by host PRMT6, impairing its function by reducing RNA annealing and the initiation of reverse transcription.

It is found in the host cell membrane. It localises to the host endosome. The protein localises to the host multivesicular body. The protein resides in the virion membrane. Its subcellular location is the host nucleus. It is found in the host cytoplasm. It localises to the virion. The enzyme catalyses Specific for a P1 residue that is hydrophobic, and P1' variable, but often Pro.. It catalyses the reaction Endohydrolysis of RNA in RNA/DNA hybrids. Three different cleavage modes: 1. sequence-specific internal cleavage of RNA. Human immunodeficiency virus type 1 and Moloney murine leukemia virus enzymes prefer to cleave the RNA strand one nucleotide away from the RNA-DNA junction. 2. RNA 5'-end directed cleavage 13-19 nucleotides from the RNA end. 3. DNA 3'-end directed cleavage 15-20 nucleotides away from the primer terminus.. The catalysed reaction is 3'-end directed exonucleolytic cleavage of viral RNA-DNA hybrid.. It carries out the reaction DNA(n) + a 2'-deoxyribonucleoside 5'-triphosphate = DNA(n+1) + diphosphate. With respect to regulation, protease: The viral protease is inhibited by many synthetic protease inhibitors (PIs), such as amprenavir, atazanavir, indinavir, loprinavir, nelfinavir, ritonavir and saquinavir. Use of protease inhibitors in tritherapy regimens permit more ambitious therapeutic strategies. Reverse transcriptase/ribonuclease H: RT can be inhibited either by nucleoside RT inhibitors (NRTIs) or by non nucleoside RT inhibitors (NNRTIs). NRTIs act as chain terminators, whereas NNRTIs inhibit DNA polymerization by binding a small hydrophobic pocket near the RT active site and inducing an allosteric change in this region. Classical NRTIs are abacavir, adefovir (PMEA), didanosine (ddI), lamivudine (3TC), stavudine (d4T), tenofovir (PMPA), zalcitabine (ddC), and zidovudine (AZT). Classical NNRTIs are atevirdine (BHAP U-87201E), delavirdine, efavirenz (DMP-266), emivirine (I-EBU), and nevirapine (BI-RG-587). The tritherapies used as a basic effective treatment of AIDS associate two NRTIs and one NNRTI. In terms of biological role, mediates, with Gag polyprotein, the essential events in virion assembly, including binding the plasma membrane, making the protein-protein interactions necessary to create spherical particles, recruiting the viral Env proteins, and packaging the genomic RNA via direct interactions with the RNA packaging sequence (Psi). Gag-Pol polyprotein may regulate its own translation, by the binding genomic RNA in the 5'-UTR. At low concentration, the polyprotein would promote translation, whereas at high concentration, the polyprotein would encapsidate genomic RNA and then shut off translation. Functionally, targets the polyprotein to the plasma membrane via a multipartite membrane-binding signal, that includes its myristoylated N-terminus. Matrix protein is part of the pre-integration complex. Implicated in the release from host cell mediated by Vpu. Binds to RNA. Forms the conical core that encapsulates the genomic RNA-nucleocapsid complex in the virion. Most core are conical, with only 7% tubular. The core is constituted by capsid protein hexamer subunits. The core is disassembled soon after virion entry. Host restriction factors such as TRIM5-alpha or TRIMCyp bind retroviral capsids and cause premature capsid disassembly, leading to blocks in reverse transcription. Capsid restriction by TRIM5 is one of the factors which restricts HIV-1 to the human species. Host PIN1 apparently facilitates the virion uncoating. On the other hand, interactions with PDZD8 or CYPA stabilize the capsid. Its function is as follows. Encapsulates and protects viral dimeric unspliced genomic RNA (gRNA). Binds these RNAs through its zinc fingers. Acts as a nucleic acid chaperone which is involved in rearangement of nucleic acid secondary structure during gRNA retrotranscription. Also facilitates template switch leading to recombination. As part of the polyprotein, participates in gRNA dimerization, packaging, tRNA incorporation and virion assembly. In terms of biological role, aspartyl protease that mediates proteolytic cleavages of Gag and Gag-Pol polyproteins during or shortly after the release of the virion from the plasma membrane. Cleavages take place as an ordered, step-wise cascade to yield mature proteins. This process is called maturation. Displays maximal activity during the budding process just prior to particle release from the cell. Also cleaves Nef and Vif, probably concomitantly with viral structural proteins on maturation of virus particles. Hydrolyzes host EIF4GI and PABP1 in order to shut off the capped cellular mRNA translation. The resulting inhibition of cellular protein synthesis serves to ensure maximal viral gene expression and to evade host immune response. Also mediates cleavage of host YTHDF3. Mediates cleavage of host CARD8, thereby activating the CARD8 inflammasome, leading to the clearance of latent HIV-1 in patient CD4(+) T-cells after viral reactivation; in contrast, HIV-1 can evade CARD8-sensing when its protease remains inactive in infected cells prior to viral budding. Functionally, multifunctional enzyme that converts the viral RNA genome into dsDNA in the cytoplasm, shortly after virus entry into the cell. This enzyme displays a DNA polymerase activity that can copy either DNA or RNA templates, and a ribonuclease H (RNase H) activity that cleaves the RNA strand of RNA-DNA heteroduplexes in a partially processive 3' to 5' endonucleasic mode. Conversion of viral genomic RNA into dsDNA requires many steps. A tRNA(3)-Lys binds to the primer-binding site (PBS) situated at the 5'-end of the viral RNA. RT uses the 3' end of the tRNA primer to perform a short round of RNA-dependent minus-strand DNA synthesis. The reading proceeds through the U5 region and ends after the repeated (R) region which is present at both ends of viral RNA. The portion of the RNA-DNA heteroduplex is digested by the RNase H, resulting in a ssDNA product attached to the tRNA primer. This ssDNA/tRNA hybridizes with the identical R region situated at the 3' end of viral RNA. This template exchange, known as minus-strand DNA strong stop transfer, can be either intra- or intermolecular. RT uses the 3' end of this newly synthesized short ssDNA to perform the RNA-dependent minus-strand DNA synthesis of the whole template. RNase H digests the RNA template except for two polypurine tracts (PPTs) situated at the 5'-end and near the center of the genome. It is not clear if both polymerase and RNase H activities are simultaneous. RNase H probably can proceed both in a polymerase-dependent (RNA cut into small fragments by the same RT performing DNA synthesis) and a polymerase-independent mode (cleavage of remaining RNA fragments by free RTs). Secondly, RT performs DNA-directed plus-strand DNA synthesis using the PPTs that have not been removed by RNase H as primers. PPTs and tRNA primers are then removed by RNase H. The 3' and 5' ssDNA PBS regions hybridize to form a circular dsDNA intermediate. Strand displacement synthesis by RT to the PBS and PPT ends produces a blunt ended, linear dsDNA copy of the viral genome that includes long terminal repeats (LTRs) at both ends. Catalyzes viral DNA integration into the host chromosome, by performing a series of DNA cutting and joining reactions. This enzyme activity takes place after virion entry into a cell and reverse transcription of the RNA genome in dsDNA. The first step in the integration process is 3' processing. This step requires a complex comprising the viral genome, matrix protein, Vpr and integrase. This complex is called the pre-integration complex (PIC). The integrase protein removes 2 nucleotides from each 3' end of the viral DNA, leaving recessed CA OH's at the 3' ends. In the second step, the PIC enters cell nucleus. This process is mediated through integrase and Vpr proteins, and allows the virus to infect a non dividing cell. This ability to enter the nucleus is specific of lentiviruses, other retroviruses cannot and rely on cell division to access cell chromosomes. In the third step, termed strand transfer, the integrase protein joins the previously processed 3' ends to the 5' ends of strands of target cellular DNA at the site of integration. The 5'-ends are produced by integrase-catalyzed staggered cuts, 5 bp apart. A Y-shaped, gapped, recombination intermediate results, with the 5'-ends of the viral DNA strands and the 3' ends of target DNA strands remaining unjoined, flanking a gap of 5 bp. The last step is viral DNA integration into host chromosome. This involves host DNA repair synthesis in which the 5 bp gaps between the unjoined strands are filled in and then ligated. Since this process occurs at both cuts flanking the HIV genome, a 5 bp duplication of host DNA is produced at the ends of HIV-1 integration. Alternatively, Integrase may catalyze the excision of viral DNA just after strand transfer, this is termed disintegration. The protein is Gag-Pol polyprotein (gag-pol) of Human immunodeficiency virus type 1 group O (isolate ANT70) (HIV-1).